The chain runs to 91 residues: DNA-directed RNA polymerase subunit omega (91 aa).

It belongs to the RNA polymerase subunit omega family. The RNAP catalytic core consists of 2 alpha, 1 beta, 1 beta' and 1 omega subunit. When a sigma factor is associated with the core the holoenzyme is formed, which can initiate transcription.

It catalyses the reaction RNA(n) + a ribonucleoside 5'-triphosphate = RNA(n+1) + diphosphate. Promotes RNA polymerase assembly. Latches the N- and C-terminal regions of the beta' subunit thereby facilitating its interaction with the beta and alpha subunits. The polypeptide is DNA-directed RNA polymerase subunit omega (Proteus mirabilis (strain HI4320)).